We begin with the raw amino-acid sequence, 280 residues long: Phosphonates import ATP-binding protein PhnC 1 (280 aa).

Residues 3-247 form the ABC transporter domain; the sequence is FRLDAASVSY…LLRELYASES (245 aa). 36–43 lines the ATP pocket; that stretch reads GPSGAGKT.

This sequence belongs to the ABC transporter superfamily. Phosphonates importer (TC 3.A.1.9.1) family. The complex is composed of two ATP-binding proteins (PhnC), two transmembrane proteins (PhnE) and a solute-binding protein (PhnD).

The protein resides in the cell inner membrane. It catalyses the reaction phosphonate(out) + ATP + H2O = phosphonate(in) + ADP + phosphate + H(+). In terms of biological role, part of the ABC transporter complex PhnCDE involved in phosphonates import. Responsible for energy coupling to the transport system. The chain is Phosphonates import ATP-binding protein PhnC 1 from Cupriavidus necator (strain ATCC 17699 / DSM 428 / KCTC 22496 / NCIMB 10442 / H16 / Stanier 337) (Ralstonia eutropha).